The sequence spans 411 residues: UPF0761 membrane protein PA14_51960 (411 aa).

A run of 6 helical transmembrane segments spans residues 36-56 (LFAVVPMMTVMFSMLSLIPAF), 92-112 (HLTWVGVVFLAVTAFTMLVTI), 132-152 (FLLYWAILSLGPLLLGAGFAV), 174-194 (LLGLMPLAFSVAAFTLLYSAV), 207-229 (GGVFTAVLFEAAKTLFGLYVSLF), and 244-264 (IFLLWIYLSWMIVLFGAVLVC).

It belongs to the UPF0761 family.

It localises to the cell inner membrane. This chain is UPF0761 membrane protein PA14_51960, found in Pseudomonas aeruginosa (strain UCBPP-PA14).